Consider the following 129-residue polypeptide: Translation initiation factor 5A (129 aa).

The residue at position 36 (Lys-36) is a Hypusine.

This sequence belongs to the eIF-5A family.

The protein resides in the cytoplasm. Functions by promoting the formation of the first peptide bond. The protein is Translation initiation factor 5A (eIF5A) of Methanobrevibacter smithii (strain ATCC 35061 / DSM 861 / OCM 144 / PS).